A 232-amino-acid polypeptide reads, in one-letter code: Orotidine 5'-phosphate decarboxylase (232 aa).

Substrate contacts are provided by residues D13, K35, 62 to 71, T122, R182, Q191, G211, and R212; that span reads DLKFHDIPNT. K64 serves as the catalytic Proton donor.

Belongs to the OMP decarboxylase family. Type 1 subfamily. Homodimer.

It carries out the reaction orotidine 5'-phosphate + H(+) = UMP + CO2. The protein operates within pyrimidine metabolism; UMP biosynthesis via de novo pathway; UMP from orotate: step 2/2. Catalyzes the decarboxylation of orotidine 5'-monophosphate (OMP) to uridine 5'-monophosphate (UMP). The sequence is that of Orotidine 5'-phosphate decarboxylase from Pseudomonas fluorescens (strain Pf0-1).